The primary structure comprises 346 residues: G-protein coupled receptor 42 (346 aa).

The Extracellular portion of the chain corresponds to 1–19; that stretch reads MDTGPDQSYFSGNHWFVFS. Residues 20-40 form a helical membrane-spanning segment; the sequence is VYLLTFLVGLPLNLLALVVFV. At 41–47 the chain is on the cytoplasmic side; sequence GKLRCRP. A helical transmembrane segment spans residues 48-68; the sequence is VAVDVLLLNLTASDLLLLLFL. The Extracellular portion of the chain corresponds to 69-90; the sequence is PFRMVEAANGMHWPLPFILCPL. A helical transmembrane segment spans residues 91–111; sequence SGFIFFTTIYLTALFLAAVSI. At 112–132 the chain is on the cytoplasmic side; it reads ERFLSVAHPLWYKTRPRLGQA. A helical membrane pass occupies residues 133-153; it reads GLVSVACWLLASAHCSVVYVI. The Extracellular portion of the chain corresponds to 154–178; that stretch reads EFSGDISHSQGTNGTCYLEFRKDQL. Residue asparagine 166 is glycosylated (N-linked (GlcNAc...) asparagine). The chain crosses the membrane as a helical span at residues 179–199; the sequence is AILLPVRLEMAVVLFVVPLII. The Cytoplasmic segment spans residues 200–222; it reads TSYCYSRLVWILGRGGSHRRQRR. The chain crosses the membrane as a helical span at residues 223-243; it reads VAGLVAATLLNFLVCFGPYNV. The Extracellular portion of the chain corresponds to 244–258; sequence SHVVGYICGESPVWR. The chain crosses the membrane as a helical span at residues 259-279; sequence IYVTLLSTLNSCVDPFVYYFS. Topologically, residues 280–346 are cytoplasmic; the sequence is SSGFQADFHE…TGGQVACAEN (67 aa). Residues 307 to 330 show a composition bias toward basic and acidic residues; it reads MELKEQKGGEEQRADRPAERKTSE. The interval 307 to 346 is disordered; that stretch reads MELKEQKGGEEQRADRPAERKTSEHSQGCGTGGQVACAEN.

Belongs to the G-protein coupled receptor 1 family.

Its subcellular location is the cell membrane. In terms of biological role, g protein-coupled receptor that is activated by short chain fatty acids (SCFAs), such as propionate. Hence may play a role in the regulation of whole-body energy homeostasis and/or in intestinal immunity. The polypeptide is G-protein coupled receptor 42 (GPR42) (Homo sapiens (Human)).